Here is a 122-residue protein sequence, read N- to C-terminus: MSLGLIASRLVAVALVVVVACSTTWARSLEGSSSPVASLIRGRSLSKRANFDPSCAGVYDRELLGGLSRLCDDCYNVFREPKVATECRSNCFYNSVFVQCLEYLIPADLHEEYQAHVQTVGK.

An N-terminal signal peptide occupies residues 1-26; that stretch reads MSLGLIASRLVAVALVVVVACSTTWA. Intrachain disulfides connect Cys-55–Cys-91, Cys-71–Cys-87, and Cys-74–Cys-100. Val-120 is subject to Valine amide.

This sequence belongs to the arthropod CHH/MIH/GIH/VIH hormone family.

It localises to the secreted. Its function is as follows. Hormone found in the sinus gland of isopods and decapods which controls the blood sugar level. Has a secretagogue action over the amylase released from the midgut gland. May act as a stress hormone and may be involved in the control of molting and reproduction. The polypeptide is Crustacean hyperglycemic hormones 5 (CHH5) (Penaeus monodon (Giant tiger prawn)).